Here is a 434-residue protein sequence, read N- to C-terminus: Probable carboxypeptidase BDCG_03757 (434 aa).

Positions 1-20 are cleaved as a signal peptide; the sequence is MKLSHLAAALSAQLVAPVAA. N-linked (GlcNAc...) asparagine glycans are attached at residues asparagine 136 and asparagine 150. Aspartate 160 lines the Zn(2+) pocket. Glutamate 192 acts as the Proton acceptor in catalysis. Glutamate 193 lines the Zn(2+) pocket. Asparagine 343 is a glycosylation site (N-linked (GlcNAc...) asparagine).

Belongs to the peptidase M20A family. It depends on Zn(2+) as a cofactor.

The protein localises to the secreted. The sequence is that of Probable carboxypeptidase BDCG_03757 from Ajellomyces dermatitidis (strain ER-3 / ATCC MYA-2586) (Blastomyces dermatitidis).